The following is a 74-amino-acid chain: Acyclotide phyb-K (74 aa).

The first 24 residues, 1–24 (MARVNSLKCALCFIVLILFVQLNC), serve as a signal peptide directing secretion. Residues 25–43 (IPETRVMAVELSRVFLQTS) constitute a propeptide that is removed on maturation. Cystine bridges form between cysteine 47-cysteine 64, cysteine 51-cysteine 66, and cysteine 56-cysteine 71.

In terms of processing, contains 3 disulfide bonds. In terms of tissue distribution, expressed in midvein, lamina and periphery of leaves (at protein level).

Its function is as follows. Probably participates in a plant defense mechanism. This Petunia hybrida (Petunia) protein is Acyclotide phyb-K.